The chain runs to 1436 residues: Probable ATP-dependent RNA helicase spindle-E (1436 aa).

One can recognise a Helicase ATP-binding domain in the interval 124–291; it reads LAAINANPVV…FTTTNSIPPV (168 aa). ATP is bound at residue 137 to 144; that stretch reads GETGCGKT. Positions 237-240 match the DEAH box motif; sequence DEVH. Positions 337–524 constitute a Helicase C-terminal domain; that stretch reads KIIMVIDNME…NSVLRAKELE (188 aa). The Tudor domain occupies 940 to 1003; the sequence is ACDISKGMMV…RFMSEELIQQ (64 aa).

This sequence belongs to the DEAD box helicase family. DEAH subfamily.

It localises to the cytoplasm. The enzyme catalyses ATP + H2O = ADP + phosphate + H(+). Functionally, probable ATP-binding RNA helicase which plays a central role during spermatogenesis and oogenesis by repressing transposable elements and preventing their mobilization, which is essential for the germline integrity. Acts via the piRNA metabolic process, which mediates the repression of transposable elements during meiosis by forming complexes composed of piRNAs and Piwi and govern the methylation and subsequent repression of transposons. Involved in the repression of LTR retrotransposon copia. Also involved in telomere regulation by repressing specialized telomeric retroelements HeT-A, TAHRE, and TART; Drosophila telomeres being maintained by transposition of specialized telomeric retroelements. Involved in telomeric trans-silencing, a repression mechanism by which a transposon or a transgene inserted in subtelomeric heterochromatin has the capacity to repress in trans in the female germline, a homologous transposon, or transgene located in euchromatin. Involved in the repression of testis-expressed Stellate genes by the homologous Su(Ste) repeats. Required for anteroposterior and dorsoventral axis formation during oogenesis. This is Probable ATP-dependent RNA helicase spindle-E (spn-E) from Drosophila yakuba (Fruit fly).